The chain runs to 442 residues: UDP-glycosyltransferase 78D4 (442 aa).

UDP-alpha-D-glucose is bound by residues 322-324 (APQ), 339-347 (HGGWNSVLE), and 361-364 (FGDH).

Belongs to the UDP-glycosyltransferase family.

This is UDP-glycosyltransferase 78D4 (UGT78D4) from Arabidopsis thaliana (Mouse-ear cress).